The primary structure comprises 124 residues: MIKGVGVDIIEINRVKNAIDRNYKFIEKLFSRREIAYIKAEKTKAQYIAGRFSAKEAVSKALGTGFRGFSFKNIEIHKDDLGKPIVVLNGGARAIAEGYGKYQVQLSISHDREKAIAYAVLEVF.

Residues Asp-8 and Glu-56 each contribute to the Mg(2+) site.

It belongs to the P-Pant transferase superfamily. AcpS family. Mg(2+) serves as cofactor.

It localises to the cytoplasm. It carries out the reaction apo-[ACP] + CoA = holo-[ACP] + adenosine 3',5'-bisphosphate + H(+). Its function is as follows. Transfers the 4'-phosphopantetheine moiety from coenzyme A to a Ser of acyl-carrier-protein. The chain is Holo-[acyl-carrier-protein] synthase from Clostridium acetobutylicum (strain ATCC 824 / DSM 792 / JCM 1419 / IAM 19013 / LMG 5710 / NBRC 13948 / NRRL B-527 / VKM B-1787 / 2291 / W).